A 315-amino-acid chain; its full sequence is Glutathione synthetase (315 aa).

Residues 125-310 form the ATP-grasp domain; the sequence is KLFTAWFSDL…ITGMLMDAIE (186 aa). ATP is bound at residue 151–207; it reads WEKHSDIILKPLDGMGGASIFRVKEGDPNLGVIAETLTEHGTRYCMAQNYLPAIKDG. Glutamate 281 and asparagine 283 together coordinate Mg(2+).

This sequence belongs to the prokaryotic GSH synthase family. It depends on Mg(2+) as a cofactor. The cofactor is Mn(2+).

It catalyses the reaction gamma-L-glutamyl-L-cysteine + glycine + ATP = glutathione + ADP + phosphate + H(+). It participates in sulfur metabolism; glutathione biosynthesis; glutathione from L-cysteine and L-glutamate: step 2/2. In Escherichia coli O157:H7, this protein is Glutathione synthetase.